Consider the following 152-residue polypeptide: Pseudo histidine-containing phosphotransfer protein 5 (152 aa).

One can recognise an HPt domain in the interval 38-140 (NPNFAEEVVS…ESYFQLLRQA (103 aa)).

In terms of biological role, functions as a two-component phosphorelay mediator between cytokinin sensor histidine kinases and response regulators (B-type ARRs). Plays an important role in propagating cytokinin signal transduction. This Oryza sativa subsp. japonica (Rice) protein is Pseudo histidine-containing phosphotransfer protein 5.